Reading from the N-terminus, the 119-residue chain is Phosphoribosyl-AMP cyclohydrolase (119 aa).

A Mg(2+)-binding site is contributed by Asp-77. Cys-78 is a Zn(2+) binding site. Residues Asp-79 and Asp-81 each contribute to the Mg(2+) site. Cys-94 and Cys-101 together coordinate Zn(2+).

The protein belongs to the PRA-CH family. As to quaternary structure, homodimer. Requires Mg(2+) as cofactor. It depends on Zn(2+) as a cofactor.

The protein resides in the cytoplasm. It catalyses the reaction 1-(5-phospho-beta-D-ribosyl)-5'-AMP + H2O = 1-(5-phospho-beta-D-ribosyl)-5-[(5-phospho-beta-D-ribosylamino)methylideneamino]imidazole-4-carboxamide. It participates in amino-acid biosynthesis; L-histidine biosynthesis; L-histidine from 5-phospho-alpha-D-ribose 1-diphosphate: step 3/9. Its function is as follows. Catalyzes the hydrolysis of the adenine ring of phosphoribosyl-AMP. The sequence is that of Phosphoribosyl-AMP cyclohydrolase from Dinoroseobacter shibae (strain DSM 16493 / NCIMB 14021 / DFL 12).